Here is a 316-residue protein sequence, read N- to C-terminus: Probable peptidyl-tRNA hydrolase 2 (316 aa).

The segment at 1–127 (MSENIPDIDP…SHPVDPQEPN (127 aa)) is disordered. Polar residues predominate over residues 44–53 (PTPSSVTVDN). The segment covering 75-89 (IPEVPIPSSAISISS) has biased composition (low complexity). The UBA domain occupies 128–169 (EVNNEYLAHLLDLGFDEYTAVLALKRTNSAGVEQAVAWIVER). The interval 170–193 (SNESDFDEDSSSSENEADEEMGAV) is disordered. The span at 173-190 (SDFDEDSSSSENEADEEM) shows a compositional bias: acidic residues.

Belongs to the PTH2 family.

It carries out the reaction an N-acyl-L-alpha-aminoacyl-tRNA + H2O = an N-acyl-L-amino acid + a tRNA + H(+). Its function is as follows. The natural substrate for this enzyme may be peptidyl-tRNAs which drop off the ribosome during protein synthesis. The chain is Probable peptidyl-tRNA hydrolase 2 from Caenorhabditis elegans.